A 316-amino-acid polypeptide reads, in one-letter code: tRNA dimethylallyltransferase (316 aa).

ATP is bound at residue 17-24; it reads GPTASGKT. 19 to 24 is a substrate binding site; the sequence is TASGKT. Interaction with substrate tRNA stretches follow at residues 42–45, 166–170, 247–252, and 280–287; these read DSAL, QRLSR, RCVGYR, and KRQITWLR.

The protein belongs to the IPP transferase family. Monomer. It depends on Mg(2+) as a cofactor.

It carries out the reaction adenosine(37) in tRNA + dimethylallyl diphosphate = N(6)-dimethylallyladenosine(37) in tRNA + diphosphate. In terms of biological role, catalyzes the transfer of a dimethylallyl group onto the adenine at position 37 in tRNAs that read codons beginning with uridine, leading to the formation of N6-(dimethylallyl)adenosine (i(6)A). This chain is tRNA dimethylallyltransferase, found in Escherichia coli O6:K15:H31 (strain 536 / UPEC).